We begin with the raw amino-acid sequence, 242 residues long: Uridylate kinase (242 aa).

Residue 17–20 (KLSG) participates in ATP binding. Glycine 59 is a binding site for UMP. ATP is bound by residues glycine 60 and arginine 64. Residues aspartate 79 and 140–147 (LGNPFFTT) each bind UMP. Residues threonine 167, tyrosine 173, and aspartate 176 each coordinate ATP.

The protein belongs to the UMP kinase family. In terms of assembly, homohexamer.

It is found in the cytoplasm. The catalysed reaction is UMP + ATP = UDP + ADP. It participates in pyrimidine metabolism; CTP biosynthesis via de novo pathway; UDP from UMP (UMPK route): step 1/1. With respect to regulation, inhibited by UTP. Functionally, catalyzes the reversible phosphorylation of UMP to UDP. This Buchnera aphidicola subsp. Baizongia pistaciae (strain Bp) protein is Uridylate kinase.